Reading from the N-terminus, the 158-residue chain is C-type lectin BfL-2 (158 aa).

Residues 1–21 form the signal peptide; sequence MGHFTFIGLCLLAMFLSLSGA. 4 disulfides stabilise this stretch: C26/C37, C54/C154, C61/C156, and C129/C146. One can recognise a C-type lectin domain in the interval 33-155; it reads KNGLCYKVFS…CETLHPFICQ (123 aa). The short motif at 119-121 is the Mannose-binding element; it reads EPN. N-linked (GlcNAc...) asparagine glycosylation occurs at N121. The Ca(2+) site is built by E127, N142, and D143.

The protein belongs to the true venom lectin family. Homodimer; non-covalently linked. As to expression, expressed by the venom gland.

It is found in the secreted. In terms of biological role, mannose-binding lectin which recognizes specific carbohydrate structures and agglutinates a variety of animal cells by binding to cell-surface glycoproteins and glycolipids. May be a calcium-dependent lectin. This Bungarus fasciatus (Banded krait) protein is C-type lectin BfL-2.